The sequence spans 81 residues: Putative membrane protein insertion efficiency factor (81 aa).

Positions N61–E81 are disordered.

The protein belongs to the UPF0161 family.

The protein resides in the cell inner membrane. Functionally, could be involved in insertion of integral membrane proteins into the membrane. This is Putative membrane protein insertion efficiency factor from Pseudomonas fluorescens (strain Pf0-1).